The primary structure comprises 172 residues: Signal peptidase complex catalytic subunit sec11 (172 aa).

The Cytoplasmic portion of the chain corresponds to 1-14; sequence MLSGLANPRQAAVQ. Residues 15–35 traverse the membrane as a helical; Signal-anchor for type II membrane protein segment; it reads LMNFGLILSTAFMMWKGISVI. The Lumenal portion of the chain corresponds to 36 to 172; the sequence is TDSPSPIVVV…MGLVVVLQRE (137 aa). Active-site charge relay system residues include Ser-49 and His-90. The N-linked (GlcNAc...) asparagine glycan is linked to Asn-111. Asp-115 (charge relay system) is an active-site residue. Residues 158-169 form a C-terminal short (CTS) helix region; that stretch reads VMLGLMGLVVVL.

It belongs to the peptidase S26B family. As to quaternary structure, component of the signal peptidase complex (SPC) composed of a catalytic subunit SEC11 and three accessory subunits SPC1, SPC2 and SPC3. The complex induces a local thinning of the ER membrane which is used to measure the length of the signal peptide (SP) h-region of protein substrates. This ensures the selectivity of the complex towards h-regions shorter than 18-20 amino acids. SPC associates with the translocon complex.

The protein localises to the endoplasmic reticulum membrane. It carries out the reaction Cleavage of hydrophobic, N-terminal signal or leader sequences from secreted and periplasmic proteins.. Functionally, catalytic component of the signal peptidase complex (SPC) which catalyzes the cleavage of N-terminal signal sequences from nascent proteins as they are translocated into the lumen of the endoplasmic reticulum. Specifically cleaves N-terminal signal peptides that contain a hydrophobic alpha-helix (h-region) shorter than 18-20 amino acids. The chain is Signal peptidase complex catalytic subunit sec11 (sec11) from Neurospora crassa (strain ATCC 24698 / 74-OR23-1A / CBS 708.71 / DSM 1257 / FGSC 987).